The following is a 386-amino-acid chain: Putative prophage major tail sheath protein (386 aa).

Belongs to the myoviridae tail sheath protein family.

The protein localises to the secreted. This chain is Putative prophage major tail sheath protein, found in Pseudomonas aeruginosa (strain UCBPP-PA14).